Consider the following 1015-residue polypeptide: Frequency clock protein (1015 aa).

Disordered regions lie at residues 1 to 138 (MQPT…SADD), 183 to 285 (KRKK…QKVD), 352 to 383 (DFSPQQQQQQQQQQQQQPKSNFITNPGATFSS), 402 to 465 (HVAG…DPDR), 544 to 614 (GRKI…VSAS), 629 to 668 (SPNEQSSMEDGTLSSFGPIEESNADSRWGQSGSGASNRRK), 706 to 728 (ERPDAQGQFARPLPFRSGSGSSI), and 895 to 1015 (SEDD…SSQG). Residues 49 to 68 (SAPPNDSNENSSSPRRASSG) show a composition bias toward low complexity. The span at 69-80 (ESHETGQSDAKK) shows a compositional bias: basic and acidic residues. Positions 82–95 (FNQSNQNPTATFDS) are enriched in polar residues. Residues 107 to 117 (KESDSSNEDKP) are compositionally biased toward basic and acidic residues. Composition is skewed to low complexity over residues 203-216 (SPNTSSSKRNSTTK), 228-267 (SGSGSKSQSKHASSSSGSHTRPVDSAYASMSTGAGSSGTS), and 356-368 (QQQQQQQQQQQQQ). A compositionally biased stretch (polar residues) spans 369-383 (PKSNFITNPGATFSS). A compositionally biased stretch (low complexity) spans 431–442 (NSSSNGNDSGTN). Over residues 443–453 (PSPPMPPPPEQ) the composition is skewed to pro residues. Positions 454-465 (RPTRPRDLDPDR) are enriched in basic and acidic residues. The span at 556–570 (TKFSSESSGDLSQRS) shows a compositional bias: polar residues. Residues 584-588 (HKRQK) carry the Nuclear localization signal motif. Residues 590–600 (GHSTGDSGSSG) show a composition bias toward low complexity. Residues 629–643 (SPNEQSSMEDGTLSS) are compositionally biased toward polar residues. Acidic residues-rich tracts occupy residues 895 to 909 (SEDDFGSDGDDEFNS) and 934 to 946 (SGDEDGEEPEDDI). Residues 976–1003 (GSSRGRSNSASAEAVLRAGGSSAATAGG) are compositionally biased toward low complexity.

It belongs to the FRQ family.

It is found in the nucleus. Circadian clock component involved in the generation of biological rhythms, in particular in rhythm stability, period length, and temperature compensation. Behaves as a negative element in circadian transcriptional loop. This Trichoderma spinulosum (Hypocrea spinulosa) protein is Frequency clock protein (FRQ).